A 304-amino-acid chain; its full sequence is MFDPIGKSGDAFALAKDYALEAKNWGADLSLKAYVDERVAAEDLKVGKCDGAIISGLRGRQFNKYTGSLDAVGALTNMKTAINAYKLLSSPMAAKNMVVGPYEIAGLGTIGPAYLFVNDRSINTLAKAAGKKIGVFKYDEAQPKLVQHVGGQAVSVDVTNAGAKFNNHEIDIVPAPIVAFKPFELYKGLGEKGAIVRFPLTQISADFIIRKDQFPAGFGQKSRTWVASQLNRTFGIIAKYESDIPSKYWMDIPKNEQLNYMKMMREARIQLTKAGIYDPKMMNFLKKVRCKENPSNFECALNDE.

It belongs to the bacterial solute-binding protein 7 family.

Mediates antimicrobial resistance via active efflux. Contributes to resistance to antibiotics such as chloramphenicol, erythromycin and novobiocin. May be part of a tripartite ATP-independent periplasmic (TRAP) transport system. The protein is Probable solute-binding protein AdeT1 of Acinetobacter baumannii.